Consider the following 491-residue polypeptide: Allene oxide synthase 3 (491 aa).

The heme b site is built by Lys104, His135, and Lys139. (13S)-hydroperoxy-(9Z,11E)-octadecadienoate is bound by residues Asn296 and Lys302. Asn296 lines the (13S)-hydroperoxy-(9Z,11E,15Z)-octadecatrienoate pocket. Heme b contacts are provided by Lys442 and Cys444.

The protein belongs to the cytochrome P450 family. Requires heme b as cofactor. Expressed in roots. Not detected in aerial tissues, including cotyledons, leaves, stems and flower buds.

It carries out the reaction (13S)-hydroperoxy-(9Z,11E,15Z)-octadecatrienoate = (9Z,13S,15Z)-12,13-epoxyoctadeca-9,11,15-trienoate + H2O. It catalyses the reaction (13S)-hydroperoxy-(9Z,11E)-octadecadienoate = (9Z,13S)-12,13-epoxyoctadeca-9,11-dienoate + H2O. The catalysed reaction is (9Z,13S,15Z)-12,13-epoxyoctadeca-9,11,15-trienoate = (9S,13S,15Z)-12-oxophyto-10,15-dienoate. Its function is as follows. Cytochrome P450 metabolizing both 13- and 9-hydroperoxides of linoleic and linolenic acids, but with a marked preference for 9-hydroperoxy fatty acids. Catalyzes not only the synthesis of allene oxide, but also its hydrolysis and cyclization. The first step is the synthesis of (12Z)-9,10-epoxyoctadeca-10,12-dienoic acid (9,10-EOD) and the final products are (9R)-alpha-ketol and the racemic cis-10-oxo-11-phytoenoic acid. The cyclase activity possesses regiospecificity and (9Z)-12,13-epoxyoctadeca-9,11-dienoic acid (12,13-EOD) is significantly less efficient as a substrate for cyclopentenone production than 9,10-EOD. Has no hydroperoxide lyase activity. May play a defensive role against soil-borne pests that affect roots or juvenile tissues as they emerge from the germinating seed. This is Allene oxide synthase 3 from Solanum lycopersicum (Tomato).